Here is a 168-residue protein sequence, read N- to C-terminus: Photosystem I assembly protein Ycf3 (168 aa).

3 TPR repeats span residues 35–68 (AFTY…EIDP), 72–105 (SYIL…NPFL), and 120–153 (GEQA…TPGN).

This sequence belongs to the Ycf3 family.

The protein resides in the plastid. Its subcellular location is the chloroplast thylakoid membrane. Its function is as follows. Essential for the assembly of the photosystem I (PSI) complex. May act as a chaperone-like factor to guide the assembly of the PSI subunits. The protein is Photosystem I assembly protein Ycf3 of Coffea arabica (Arabian coffee).